The following is a 157-amino-acid chain: Endoribonuclease YbeY (157 aa).

Positions 114, 118, and 124 each coordinate Zn(2+).

The protein belongs to the endoribonuclease YbeY family. It depends on Zn(2+) as a cofactor.

It is found in the cytoplasm. Functionally, single strand-specific metallo-endoribonuclease involved in late-stage 70S ribosome quality control and in maturation of the 3' terminus of the 16S rRNA. The protein is Endoribonuclease YbeY of Salmonella dublin (strain CT_02021853).